A 159-amino-acid chain; its full sequence is GDP-mannose mannosyl hydrolase (159 aa).

Residues 2-3 (FL), Phe8, and Arg36 each bind substrate. The region spanning 13 to 153 (RSTPLVSLDF…SRAYFLAEKR (141 aa)) is the Nudix hydrolase domain. Residues Gly49, Glu69, and Gln122 each coordinate Mg(2+). The Nudix box signature appears at 50-71 (GRVQKDETLEAAFERLTMAELG).

Belongs to the Nudix hydrolase family. In terms of assembly, homodimer. It depends on Mg(2+) as a cofactor.

The catalysed reaction is GDP-alpha-D-mannose + H2O = D-mannose + GDP + H(+). Functionally, hydrolyzes GDP-mannose. In Escherichia coli O157:H7, this protein is GDP-mannose mannosyl hydrolase.